Consider the following 485-residue polypeptide: Glutamyl-tRNA(Gln) amidotransferase subunit A (485 aa).

Residues Lys78 and Ser153 each act as charge relay system in the active site. The active-site Acyl-ester intermediate is Ser177.

This sequence belongs to the amidase family. GatA subfamily. As to quaternary structure, heterotrimer of A, B and C subunits.

It carries out the reaction L-glutamyl-tRNA(Gln) + L-glutamine + ATP + H2O = L-glutaminyl-tRNA(Gln) + L-glutamate + ADP + phosphate + H(+). Its function is as follows. Allows the formation of correctly charged Gln-tRNA(Gln) through the transamidation of misacylated Glu-tRNA(Gln) in organisms which lack glutaminyl-tRNA synthetase. The reaction takes place in the presence of glutamine and ATP through an activated gamma-phospho-Glu-tRNA(Gln). This chain is Glutamyl-tRNA(Gln) amidotransferase subunit A, found in Geobacter sp. (strain M21).